A 432-amino-acid chain; its full sequence is FAD-dependent monooxygenase pynG (432 aa).

Residues E32, R103, D315, and A328 each coordinate FAD.

The protein belongs to the paxM FAD-dependent monooxygenase family. It depends on FAD as a cofactor.

It participates in secondary metabolite biosynthesis. In terms of biological role, FAD-dependent monooxygenase; part of the gene cluster that mediates the biosynthesis of pyranonigrins, a family of antioxidative compounds. The first step of pyranonigrins biosynthesis is performed by the hybrid PKS-NRPS synthetase that condenses 6 malonyl-CoA units to an acetyl starter unit, to form a 1,3,5-trioxotetradecane-6,8-dienyl-ACP. The enoyl reductase (ER) domain of pynA is likely to be functional during the first two rounds of polyketide chain extension, to generate the saturated C-C bonds of the alkyl side chain. PynA subsequently forms the amide bond between the acyl chain and L-serine. Although pynA has a terminal reductase domain, it appears to require the thioesterase pynI for the release of the straight-chain intermediate from pynA via the formation of a tetramic acid pyranonigrin J. The methyltransferase pynC then coverts pyranonigrin J to pyranonigrin I via N-methylation. The FAD-dependent monooxygenase pynG catalyzes an epoxidation-mediated cyclization to form the dihydro-gamma-pyrone moiety, followed by pynD-catalyzed oxidation of the alcohol to the ketone and enolization to yield the characteristic tetramic acid-fused gamma-pyrone core of pyranonigrin H. Pyranonigrin H is substrate of pynH for dehydration-mediated exo-methylene formation from the serine side chain to produce pyranonigrin E, before the oxidase pynE reduces the exo-methylene of pyranonigrin E into a pendant methyl to form pyranonigrin G. The FAD-linked oxidoreductase pynB performs the reverse reaction and converts pyranonigrin G back to pyranonigrin E. The polypeptide is FAD-dependent monooxygenase pynG (Aspergillus niger (strain ATCC MYA-4892 / CBS 513.88 / FGSC A1513)).